Reading from the N-terminus, the 362-residue chain is Aminomethyltransferase (362 aa).

The protein belongs to the GcvT family. As to quaternary structure, the glycine cleavage system is composed of four proteins: P, T, L and H.

It carries out the reaction N(6)-[(R)-S(8)-aminomethyldihydrolipoyl]-L-lysyl-[protein] + (6S)-5,6,7,8-tetrahydrofolate = N(6)-[(R)-dihydrolipoyl]-L-lysyl-[protein] + (6R)-5,10-methylene-5,6,7,8-tetrahydrofolate + NH4(+). Its function is as follows. The glycine cleavage system catalyzes the degradation of glycine. The polypeptide is Aminomethyltransferase (Listeria welshimeri serovar 6b (strain ATCC 35897 / DSM 20650 / CCUG 15529 / CIP 8149 / NCTC 11857 / SLCC 5334 / V8)).